The chain runs to 338 residues: Tetraacyldisaccharide 4'-kinase (338 aa).

66–73 (IAGGAGKT) contacts ATP.

Belongs to the LpxK family.

The catalysed reaction is a lipid A disaccharide + ATP = a lipid IVA + ADP + H(+). It participates in glycolipid biosynthesis; lipid IV(A) biosynthesis; lipid IV(A) from (3R)-3-hydroxytetradecanoyl-[acyl-carrier-protein] and UDP-N-acetyl-alpha-D-glucosamine: step 6/6. Its function is as follows. Transfers the gamma-phosphate of ATP to the 4'-position of a tetraacyldisaccharide 1-phosphate intermediate (termed DS-1-P) to form tetraacyldisaccharide 1,4'-bis-phosphate (lipid IVA). This is Tetraacyldisaccharide 4'-kinase from Delftia acidovorans (strain DSM 14801 / SPH-1).